Here is a 269-residue protein sequence, read N- to C-terminus: Orotidine 5'-phosphate decarboxylase (269 aa).

K92 serves as the catalytic Proton donor.

It belongs to the OMP decarboxylase family. Type 2 subfamily.

It catalyses the reaction orotidine 5'-phosphate + H(+) = UMP + CO2. It participates in pyrimidine metabolism; UMP biosynthesis via de novo pathway; UMP from orotate: step 2/2. The protein is Orotidine 5'-phosphate decarboxylase of Natronomonas pharaonis (strain ATCC 35678 / DSM 2160 / CIP 103997 / JCM 8858 / NBRC 14720 / NCIMB 2260 / Gabara) (Halobacterium pharaonis).